The primary structure comprises 523 residues: 2-hydroxyisoflavanone synthase (523 aa).

Residues 2-22 traverse the membrane as a helical segment; sequence LVELAITLLVIALFIHLRPTL. Heme is bound at residue Cys450.

It belongs to the cytochrome P450 family. Heme is required as a cofactor.

The protein localises to the microsome membrane. The enzyme catalyses (2S)-liquiritigenin + reduced [NADPH--hemoprotein reductase] + O2 = (2R,3S)-2,4',7-trihydroxyisoflavanone + oxidized [NADPH--hemoprotein reductase] + H2O + H(+). The catalysed reaction is (2S)-naringenin + reduced [NADPH--hemoprotein reductase] + O2 = 2-hydroxy-2,3-dihydrogenistein + oxidized [NADPH--hemoprotein reductase] + H2O + H(+). Its function is as follows. 2-hydroxyisoflavanone synthase, which catalyzes the hydroxylation associated with 1,2-aryl migration of flavanones. Converts liquiritigenin and naringenin into highly unstable precursors of the isoflavones daidzein and genistein. Acts only on substrates with (2S)-chirality. In Glycyrrhiza echinata (Licorice), this protein is 2-hydroxyisoflavanone synthase (CYP93C2).